Consider the following 2871-residue polypeptide: Fibrillin-1 (2871 aa).

Positions Met-1–Gly-24 are cleaved as a signal peptide. The propeptide occupies Ala-25–Arg-44. The segment at Arg-45–Ile-81 is fibrillin unique N-terminal (FUN) domain. Residues Arg-45–Thr-450 are N-terminal domain. Disulfide bonds link Cys-59/Cys-68, Cys-67/Cys-80, Cys-85/Cys-94, Cys-89/Cys-100, Cys-102/Cys-111, Cys-119/Cys-129, Cys-123/Cys-134, Cys-136/Cys-145, Cys-150/Cys-160, Cys-154/Cys-166, and Cys-168/Cys-177. EGF-like domains lie at Ile-81–Gly-112, Ser-115–Gly-146, and Gln-147–Glu-178. The tract at residues Cys-119–Ile-329 is interaction with MFAP4. The TB 1 domain maps to Gly-184–Ile-236. Residues Cys-195–Cys-221 form a hybrid domain 1 region. An EGF-like 4; calcium-binding domain is found at Asp-246 to Glu-287. 6 disulfide bridges follow: Cys-250/Cys-262, Cys-257/Cys-271, Cys-273/Cys-286, Cys-292/Cys-304, Cys-299/Cys-313, and Cys-315/Cys-328. Ser-268 carries an O-linked (Glc) serine glycan. Positions Asp-288–Ile-329 constitute an EGF-like 5; calcium-binding domain. One can recognise a TB 2 domain in the interval Gly-334–Cys-389. N-linked (GlcNAc...) asparagine glycosylation occurs at Asn-448. Positions Val-449–Ile-489 constitute an EGF-like 6 domain. 15 disulfide bridges follow: Cys-453-Cys-465, Cys-460-Cys-474, Cys-476-Cys-488, Cys-494-Cys-504, Cys-499-Cys-513, Cys-515-Cys-528, Cys-534-Cys-546, Cys-541-Cys-555, Cys-557-Cys-570, Cys-576-Cys-587, Cys-582-Cys-596, Cys-598-Cys-611, Cys-617-Cys-628, Cys-623-Cys-637, and Cys-639-Cys-652. Residue Ser-471 is glycosylated (O-linked (Glc) serine). Residues Asp-490–Arg-529 form the EGF-like 7; calcium-binding domain. Ser-510 carries an O-linked (Glc) serine glycan. One can recognise an EGF-like 8; calcium-binding domain in the interval Asp-530–Glu-571. The 41-residue stretch at Asp-572–Lys-612 folds into the EGF-like 9; calcium-binding domain. Residues Asp-613 to Val-653 enclose the EGF-like 10; calcium-binding domain. Residues Ser-659–Cys-711 enclose the TB 3 domain. In terms of domain architecture, EGF-like 11; calcium-binding spans Asp-723–Val-764. Disulfide bonds link Cys-727-Cys-739, Cys-734-Cys-748, Cys-750-Cys-763, Cys-769-Cys-781, Cys-776-Cys-790, Cys-792-Cys-805, Cys-811-Cys-821, Cys-816-Cys-830, Cys-832-Cys-845, Cys-853-Cys-875, Cys-862-Cys-887, Cys-876-Cys-890, Cys-896-Cys-908, Cys-914-Cys-926, Cys-921-Cys-935, and Cys-937-Cys-950. Residues Asp-765–Glu-806 enclose the EGF-like 12; calcium-binding domain. The EGF-like 13; calcium-binding domain occupies Asp-807–Ile-846. A TB 4 domain is found at Gly-851–Arg-902. Residues Cys-862–Cys-887 form a hybrid domain 2 region. One can recognise an EGF-like 14; calcium-binding domain in the interval Asp-910 to Leu-951. Residues Glu-956–Cys-1008 form the TB 5 domain. The EGF-like 15; calcium-binding domain occupies Asp-1028–Thr-1069. 46 disulfides stabilise this stretch: Cys-1032/Cys-1044, Cys-1039/Cys-1053, Cys-1055/Cys-1068, Cys-1074/Cys-1086, Cys-1081/Cys-1095, Cys-1097/Cys-1111, Cys-1117/Cys-1129, Cys-1124/Cys-1138, Cys-1140/Cys-1153, Cys-1159/Cys-1171, Cys-1166/Cys-1180, Cys-1182/Cys-1195, Cys-1201/Cys-1212, Cys-1208/Cys-1221, Cys-1223/Cys-1236, Cys-1242/Cys-1254, Cys-1249/Cys-1263, Cys-1265/Cys-1278, Cys-1284/Cys-1296, Cys-1291/Cys-1305, Cys-1307/Cys-1320, Cys-1326/Cys-1339, Cys-1333/Cys-1348, Cys-1350/Cys-1361, Cys-1367/Cys-1380, Cys-1374/Cys-1389, Cys-1391/Cys-1402, Cys-1408/Cys-1420, Cys-1415/Cys-1429, Cys-1431/Cys-1444, Cys-1450/Cys-1461, Cys-1456/Cys-1470, Cys-1472/Cys-1485, Cys-1491/Cys-1502, Cys-1497/Cys-1511, Cys-1513/Cys-1526, Cys-1534/Cys-1562, Cys-1549/Cys-1574, Cys-1563/Cys-1577, Cys-1564/Cys-1589, Cys-1610/Cys-1622, Cys-1617/Cys-1631, Cys-1633/Cys-1646, Cys-1652/Cys-1663, Cys-1658/Cys-1672, and Cys-1674/Cys-1687. N-linked (GlcNAc...) asparagine glycosylation is present at Asn-1067. One can recognise an EGF-like 16; calcium-binding domain in the interval Asp-1070 to Met-1112. The EGF-like 17; calcium-binding domain maps to Asp-1113 to Ile-1154. O-linked (Glc) serine glycosylation is present at Ser-1135. Residue Asn-1149 is glycosylated (N-linked (GlcNAc...) asparagine). The 42-residue stretch at Asp-1155–Val-1196 folds into the EGF-like 18; calcium-binding domain. Residues Asp-1197–Thr-1237 form the EGF-like 19; calcium-binding domain. A glycan (O-linked (Glc) serine) is linked at Ser-1218. The 42-residue stretch at Asp-1238–Val-1279 folds into the EGF-like 20; calcium-binding domain. Residues Asp-1280–Thr-1321 form the EGF-like 21; calcium-binding domain. O-linked (Glc) serine glycosylation occurs at Ser-1302. The region spanning Asp-1322–Thr-1362 is the EGF-like 22; calcium-binding domain. Residue Ser-1345 is glycosylated (O-linked (Glc) serine). The EGF-like 23; calcium-binding domain occupies Asp-1363–Thr-1403. A glycan (N-linked (GlcNAc...) asparagine) is linked at Asn-1369. O-linked (Glc) serine glycosylation is present at Ser-1386. Positions Asp-1404–Glu-1445 constitute an EGF-like 24; calcium-binding domain. In terms of domain architecture, EGF-like 25; calcium-binding spans Asp-1446–Thr-1486. N-linked (GlcNAc...) asparagine glycosylation occurs at Asn-1484. The EGF-like 26; calcium-binding domain maps to Asp-1487–Val-1527. A glycan (O-linked (Glc) serine) is linked at Ser-1508. Residues Asp-1528 to Arg-2731 form a C-terminal domain region. Residues Gly-1532 to Cys-1589 enclose the TB 6 domain. The Cell attachment site signature appears at Arg-1541–Asp-1543. Residue Asn-1581 is glycosylated (N-linked (GlcNAc...) asparagine). In terms of domain architecture, EGF-like 27; calcium-binding spans Asp-1606–Asp-1647. O-linked (Glc) serine glycosylation is present at Ser-1628. The region spanning Asp-1648–Met-1688 is the EGF-like 28; calcium-binding domain. Asn-1669 carries N-linked (GlcNAc...) asparagine glycosylation. In terms of domain architecture, TB 7 spans Ser-1693–Cys-1748. N-linked (GlcNAc...) asparagine glycans are attached at residues Asn-1703 and Asn-1713. Residues Asp-1766–Glu-1807 form the EGF-like 29; calcium-binding domain. Intrachain disulfides connect Cys-1770/Cys-1782, Cys-1777/Cys-1791, Cys-1793/Cys-1806, Cys-1812/Cys-1824, Cys-1818/Cys-1833, Cys-1835/Cys-1847, Cys-1853/Cys-1865, Cys-1860/Cys-1874, Cys-1876/Cys-1889, Cys-1895/Cys-1905, Cys-1900/Cys-1914, Cys-1916/Cys-1928, Cys-1934/Cys-1947, Cys-1942/Cys-1956, Cys-1958/Cys-1971, Cys-1977/Cys-1989, Cys-1984/Cys-1998, Cys-2000/Cys-2011, Cys-2017/Cys-2029, Cys-2024/Cys-2038, Cys-2040/Cys-2053, Cys-2061/Cys-2083, Cys-2070/Cys-2096, Cys-2084/Cys-2099, Cys-2085/Cys-2111, Cys-2131/Cys-2142, Cys-2137/Cys-2151, Cys-2153/Cys-2164, Cys-2170/Cys-2181, Cys-2176/Cys-2190, Cys-2192/Cys-2204, Cys-2210/Cys-2221, Cys-2217/Cys-2230, Cys-2232/Cys-2245, Cys-2251/Cys-2265, Cys-2258/Cys-2274, Cys-2276/Cys-2289, Cys-2295/Cys-2307, Cys-2302/Cys-2316, and Cys-2318/Cys-2331. The 41-residue stretch at Asp-1808–Asn-1848 folds into the EGF-like 30; calcium-binding domain. O-linked (Glc) serine glycosylation is present at Ser-1830. Residues Asp-1849–Leu-1890 enclose the EGF-like 31; calcium-binding domain. The O-linked (Glc) serine glycan is linked to Ser-1871. Positions Asp-1891–Ile-1929 constitute an EGF-like 32; calcium-binding domain. Residue Asn-1902 is glycosylated (N-linked (GlcNAc...) asparagine). A glycan (O-linked (Glc) serine) is linked at Ser-1911. The region spanning Asp-1930–Val-1972 is the EGF-like 33; calcium-binding domain. Ser-1953 is a glycosylation site (O-linked (Glc) serine). Positions Asp-1973–Glu-2012 constitute an EGF-like 34; calcium-binding domain. The region spanning Asp-2013 to Gln-2054 is the EGF-like 35; calcium-binding domain. The O-linked (Glc) serine glycan is linked to Ser-2035. The TB 8 domain occupies Ser-2059 to Cys-2111. A glycan (N-linked (GlcNAc...) asparagine) is linked at Asn-2077. Residues Asp-2127 to Val-2165 form the EGF-like 36; calcium-binding domain. O-linked (Glc) serine glycosylation occurs at Ser-2148. The EGF-like 37; calcium-binding domain occupies Asp-2166–Glu-2205. Asn-2178 is a glycosylation site (N-linked (GlcNAc...) asparagine). One can recognise an EGF-like 38; calcium-binding domain in the interval Asp-2206–Lys-2246. A glycan (O-linked (Glc) serine) is linked at Ser-2227. The region spanning Asp-2247–Val-2290 is the EGF-like 39; calcium-binding domain. An EGF-like 40; calcium-binding domain is found at Asp-2291–Leu-2332. An O-linked (Glc) serine glycan is attached at Ser-2313. The TB 9 domain maps to Gly-2337 to Cys-2390. An EGF-like 41; calcium-binding domain is found at Asp-2402–Val-2443. 21 disulfide bridges follow: Cys-2406–Cys-2418, Cys-2413–Cys-2427, Cys-2429–Cys-2442, Cys-2448–Cys-2459, Cys-2455–Cys-2468, Cys-2470–Cys-2483, Cys-2489–Cys-2500, Cys-2496–Cys-2509, Cys-2511–Cys-2522, Cys-2528–Cys-2541, Cys-2535–Cys-2550, Cys-2552–Cys-2565, Cys-2571–Cys-2581, Cys-2577–Cys-2590, Cys-2592–Cys-2605, Cys-2611–Cys-2622, Cys-2617–Cys-2631, Cys-2633–Cys-2646, Cys-2652–Cys-2663, Cys-2659–Cys-2672, and Cys-2674–Cys-2686. One can recognise an EGF-like 42; calcium-binding domain in the interval Asp-2444–Lys-2484. O-linked (Glc) serine glycosylation occurs at Ser-2465. In terms of domain architecture, EGF-like 43; calcium-binding spans Asp-2485–Ile-2523. The EGF-like 44; calcium-binding domain maps to Asp-2524–Glu-2566. An O-linked (Glc) serine glycan is attached at Ser-2547. The 40-residue stretch at Asp-2567–Val-2606 folds into the EGF-like 45; calcium-binding domain. The EGF-like 46; calcium-binding domain maps to Asp-2607–Gln-2647. An O-linked (Glc) serine glycan is attached at Ser-2628. The region spanning Asp-2648 to Val-2687 is the EGF-like 47; calcium-binding domain. Ser-2702 and Ser-2709 each carry phosphoserine. 3 N-linked (GlcNAc...) asparagine glycosylation sites follow: Asn-2734, Asn-2750, and Asn-2767.

This sequence belongs to the fibrillin family. In terms of assembly, interacts with COL16A1. Interacts with integrin alpha-V/beta-3. Interacts with ADAMTS10; this interaction promotes microfibril assembly. Interacts with THSD4; this interaction promotes fibril formation. Interacts (via N-terminal domain) with FBLN2 and FBLN5. Interacts with ELN. Forms a ternary complex with ELN and FBLN2 or FBLN5 and a significant interaction with ELN seen only in the presence of FBLN2 or FBLN5. Interacts (via N-terminal domain) with LTBP2 (via C-terminal domain) in a Ca(+2)-dependent manner. Interacts (via N-terminal domain) with LTBP1 (via C-terminal domain). Interacts with integrins ITGA5:ITGB1, ITGAV:ITGB3 and ITGAV:ITGB6. Interacts (via N-terminal domain) with BMP2, BMP4, BMP7, BMP10 and GDF5. Interacts (via N-terminal domain) with MFAP2 and MFAP5. Interacts with ADAMTSL5. Interacts with MFAP4. Interacts (via N-terminal domain) with TNFSF11 in a Ca(+2)-dependent manner. Interacts (via N-terminal domain) with EFEMP2; this interaction inhibits EFEMP2 binding to LOX and ELN. Post-translationally, cleavage of N- and C-terminus by furin is required for incorporation into the extracellular matrix and assembly into microfibrils. The C-terminus, which corresponds to the Asprosin chain, was initially thought to constitute a propeptide. Fibrillin-1 and Asprosin chains are still linked together during the secretion from cells, but are subsequently separated by furin, an essential step for incorporation of Fibrillin-1 into the nascent microfibrils. In terms of processing, forms intermolecular disulfide bonds either with other fibrillin-1 molecules or with other components of the microfibrils. O-glycosylated on serine residues by POGLUT2 and POGLUT3 which is necessary for efficient protein secretion.

The protein resides in the secreted. It localises to the extracellular space. Its subcellular location is the extracellular matrix. Functionally, structural component of the 10-12 nm diameter microfibrils of the extracellular matrix, which conveys both structural and regulatory properties to load-bearing connective tissues. Fibrillin-1-containing microfibrils provide long-term force bearing structural support. In tissues such as the lung, blood vessels and skin, microfibrils form the periphery of the elastic fiber, acting as a scaffold for the deposition of elastin. In addition, microfibrils can occur as elastin-independent networks in tissues such as the ciliary zonule, tendon, cornea and glomerulus where they provide tensile strength and have anchoring roles. Fibrillin-1 also plays a key role in tissue homeostasis through specific interactions with growth factors, such as the bone morphogenetic proteins (BMPs), growth and differentiation factors (GDFs) and latent transforming growth factor-beta-binding proteins (LTBPs), cell-surface integrins and other extracellular matrix protein and proteoglycan components. Regulates osteoblast maturation by controlling TGF-beta bioavailability and calibrating TGF-beta and BMP levels, respectively. Negatively regulates osteoclastogenesis by binding and sequestering an osteoclast differentiation and activation factor TNFSF11. This leads to disruption of TNFSF11-induced Ca(2+) signaling and impairment of TNFSF11-mediated nuclear translocation and activation of transcription factor NFATC1 which regulates genes important for osteoclast differentiation and function. Mediates cell adhesion via its binding to cell surface receptors integrins ITGAV:ITGB3 and ITGA5:ITGB1. Binds heparin and this interaction plays an important role in the assembly of microfibrils. In terms of biological role, hormone that targets the liver to increase plasma glucose levels. Secreted by white adipose tissue and circulates in the plasma. Acts in response to fasting and promotes blood glucose elevation by binding to the surface of hepatocytes. Promotes hepatocyte glucose release by activating the protein kinase A activity in the liver, resulting in rapid glucose release into the circulation. In Bos taurus (Bovine), this protein is Fibrillin-1.